Consider the following 675-residue polypeptide: UvrABC system protein B (675 aa).

The region spanning 32-417 (EGLSDGLAYQ…EHAGQVVEQV (386 aa)) is the Helicase ATP-binding domain. Residue 45-52 (GVTGSGKT) participates in ATP binding. Positions 98 to 121 (YYDYYQPEAYVPSRDLFIEKDSAI) match the Beta-hairpin motif. In terms of domain architecture, Helicase C-terminal spans 436–602 (QVDDLMSEIN…QIKKQVKDII (167 aa)). Residues 634–669 (IKEIAKLEKAMQQAARDLQFEEAAVLRDRIRDIKEN) form the UVR domain.

Belongs to the UvrB family. As to quaternary structure, forms a heterotetramer with UvrA during the search for lesions. Interacts with UvrC in an incision complex.

Its subcellular location is the cytoplasm. Functionally, the UvrABC repair system catalyzes the recognition and processing of DNA lesions. A damage recognition complex composed of 2 UvrA and 2 UvrB subunits scans DNA for abnormalities. Upon binding of the UvrA(2)B(2) complex to a putative damaged site, the DNA wraps around one UvrB monomer. DNA wrap is dependent on ATP binding by UvrB and probably causes local melting of the DNA helix, facilitating insertion of UvrB beta-hairpin between the DNA strands. Then UvrB probes one DNA strand for the presence of a lesion. If a lesion is found the UvrA subunits dissociate and the UvrB-DNA preincision complex is formed. This complex is subsequently bound by UvrC and the second UvrB is released. If no lesion is found, the DNA wraps around the other UvrB subunit that will check the other stand for damage. The polypeptide is UvrABC system protein B (Neisseria meningitidis serogroup B (strain ATCC BAA-335 / MC58)).